A 154-amino-acid polypeptide reads, in one-letter code: tRNA-splicing endonuclease (154 aa).

Catalysis depends on residues tyrosine 86, histidine 102, and lysine 133.

The protein belongs to the tRNA-intron endonuclease family. Archaeal short subfamily. Homotetramer; although the tetramer contains four active sites, only two participate in the cleavage. Therefore, it should be considered as a dimer of dimers.

It catalyses the reaction pretRNA = a 3'-half-tRNA molecule with a 5'-OH end + a 5'-half-tRNA molecule with a 2',3'-cyclic phosphate end + an intron with a 2',3'-cyclic phosphate and a 5'-hydroxyl terminus.. In terms of biological role, endonuclease that removes tRNA introns. Cleaves pre-tRNA at the 5'- and 3'-splice sites to release the intron. The products are an intron and two tRNA half-molecules bearing 2',3' cyclic phosphate and 5'-OH termini. Recognizes a pseudosymmetric substrate in which 2 bulged loops of 3 bases are separated by a stem of 4 bp. This Nanoarchaeum equitans (strain Kin4-M) protein is tRNA-splicing endonuclease.